Here is a 509-residue protein sequence, read N- to C-terminus: Meiotic fizzy-related protein 2 (509 aa).

WD repeat units follow at residues 159–196 (LDDF…SIME), 199–238 (PTTY…NRCD), 242–281 (HHDG…MRRV), 287–326 (VHQE…NKKF), 329–371 (IHLA…RIHS), and 437–477 (IHTH…QEIH).

This sequence belongs to the WD repeat CDC20/Fizzy family.

The protein resides in the nucleus. Functionally, has a role in meiosis. The sequence is that of Meiotic fizzy-related protein 2 (mfr2) from Schizosaccharomyces pombe (strain 972 / ATCC 24843) (Fission yeast).